Here is a 72-residue protein sequence, read N- to C-terminus: Translation initiation factor IF-1 (72 aa).

The 72-residue stretch at 1-72 (MIKEDNIEMH…SKGRIIFRSR (72 aa)) folds into the S1-like domain.

Belongs to the IF-1 family. As to quaternary structure, component of the 30S ribosomal translation pre-initiation complex which assembles on the 30S ribosome in the order IF-2 and IF-3, IF-1 and N-formylmethionyl-tRNA(fMet); mRNA recruitment can occur at any time during PIC assembly.

The protein resides in the cytoplasm. One of the essential components for the initiation of protein synthesis. Stabilizes the binding of IF-2 and IF-3 on the 30S subunit to which N-formylmethionyl-tRNA(fMet) subsequently binds. Helps modulate mRNA selection, yielding the 30S pre-initiation complex (PIC). Upon addition of the 50S ribosomal subunit IF-1, IF-2 and IF-3 are released leaving the mature 70S translation initiation complex. This is Translation initiation factor IF-1 from Blochmanniella floridana.